We begin with the raw amino-acid sequence, 347 residues long: Quinolinate synthase (347 aa).

Iminosuccinate is bound by residues His-47 and Ser-68. Position 113 (Cys-113) interacts with [4Fe-4S] cluster. Residues 139-141 and Ser-156 contribute to the iminosuccinate site; that span reads YAN. Residue Cys-200 coordinates [4Fe-4S] cluster. Residues 226–228 and Thr-243 contribute to the iminosuccinate site; that span reads HPE. Cys-297 contributes to the [4Fe-4S] cluster binding site.

The protein belongs to the quinolinate synthase family. Type 1 subfamily. The cofactor is [4Fe-4S] cluster.

Its subcellular location is the cytoplasm. The enzyme catalyses iminosuccinate + dihydroxyacetone phosphate = quinolinate + phosphate + 2 H2O + H(+). It participates in cofactor biosynthesis; NAD(+) biosynthesis; quinolinate from iminoaspartate: step 1/1. Functionally, catalyzes the condensation of iminoaspartate with dihydroxyacetone phosphate to form quinolinate. In Escherichia fergusonii (strain ATCC 35469 / DSM 13698 / CCUG 18766 / IAM 14443 / JCM 21226 / LMG 7866 / NBRC 102419 / NCTC 12128 / CDC 0568-73), this protein is Quinolinate synthase.